The primary structure comprises 98 residues: NADH-ubiquinone oxidoreductase chain 4L (98 aa).

Helical transmembrane passes span 2 to 22 (TPIFTNIILAFATAFLGTLIF), 29 to 49 (SLLCLEGMMLSLFILSTLIIL), and 61 to 81 (ILLLVFAACEAAIGLALLVMV).

It belongs to the complex I subunit 4L family. As to quaternary structure, core subunit of respiratory chain NADH dehydrogenase (Complex I) which is composed of 45 different subunits.

It localises to the mitochondrion inner membrane. It catalyses the reaction a ubiquinone + NADH + 5 H(+)(in) = a ubiquinol + NAD(+) + 4 H(+)(out). Its function is as follows. Core subunit of the mitochondrial membrane respiratory chain NADH dehydrogenase (Complex I) which catalyzes electron transfer from NADH through the respiratory chain, using ubiquinone as an electron acceptor. Part of the enzyme membrane arm which is embedded in the lipid bilayer and involved in proton translocation. In Avahi cleesei (Cleese's woolly lemur), this protein is NADH-ubiquinone oxidoreductase chain 4L (MT-ND4L).